The sequence spans 464 residues: Ubiquinone biosynthesis monooxygenase COQ6, mitochondrial (464 aa).

A mitochondrion-targeting transit peptide spans 1–24 (MRCLGGSSLSRLLRMLSQSQGRAL).

This sequence belongs to the UbiH/COQ6 family. As to quaternary structure, component of a multi-subunit COQ enzyme complex, composed of at least coq3, coq4, coq5, coq6, coq7 and coq9. Interacts with coq8b and coq7. Requires FAD as cofactor.

The protein localises to the mitochondrion inner membrane. The protein resides in the golgi apparatus. Its subcellular location is the cell projection. It catalyses the reaction a 4-hydroxy-3-(all-trans-polyprenyl)benzoate + 2 reduced [2Fe-2S]-[ferredoxin] + O2 + 2 H(+) = a 3,4-dihydroxy-5-(all-trans-polyprenyl)benzoate + 2 oxidized [2Fe-2S]-[ferredoxin] + H2O. The catalysed reaction is a 2-methoxy-6-(all-trans-polyprenyl)phenol + 2 reduced [2Fe-2S]-[ferredoxin] + O2 + 2 H(+) = a 2-methoxy-6-(all-trans-polyprenyl)benzene-1,4-diol + 2 oxidized [2Fe-2S]-[ferredoxin] + H2O. The protein operates within cofactor biosynthesis; ubiquinone biosynthesis. FAD-dependent monooxygenase required for two non-consecutive steps during ubiquinone biosynthesis. Required for the C5-ring hydroxylation during ubiquinone biosynthesis by catalyzing the hydroxylation of 4-hydroxy-3-(all-trans-polyprenyl)benzoic acid to 3,4-dihydroxy-5-(all-trans-polyprenyl)benzoic acid. Also acts downstream of coq4, for the C1-hydroxylation during ubiquinone biosynthesis by catalyzing the hydroxylation of 2-methoxy-6-(all-trans-polyprenyl)phenol to 2-methoxy-6-(all-trans-polyprenyl)benzene-1,4-diol. The electrons required for the hydroxylation reaction are funneled indirectly to coq6 from NADPH via a ferredoxin/ferredoxin reductase system. The sequence is that of Ubiquinone biosynthesis monooxygenase COQ6, mitochondrial from Xenopus tropicalis (Western clawed frog).